A 335-amino-acid chain; its full sequence is Holliday junction branch migration complex subunit RuvB (335 aa).

The segment at 1 to 183 (MDERIISSET…FGVIDHLEFY (183 aa)) is large ATPase domain (RuvB-L). Residues Leu22, Arg23, Gly64, Lys67, Thr68, Thr69, 130–132 (EDY), Arg173, Tyr183, and Arg220 contribute to the ATP site. Thr68 contacts Mg(2+). The small ATPAse domain (RuvB-S) stretch occupies residues 184–254 (TEEQLTEIVL…LAKEALTLLQ (71 aa)). Positions 257–335 (PRGLDTIDQK…HLGISYEKEV (79 aa)) are head domain (RuvB-H). Residues Arg293, Arg312, and Arg317 each contribute to the DNA site.

Belongs to the RuvB family. As to quaternary structure, homohexamer. Forms an RuvA(8)-RuvB(12)-Holliday junction (HJ) complex. HJ DNA is sandwiched between 2 RuvA tetramers; dsDNA enters through RuvA and exits via RuvB. An RuvB hexamer assembles on each DNA strand where it exits the tetramer. Each RuvB hexamer is contacted by two RuvA subunits (via domain III) on 2 adjacent RuvB subunits; this complex drives branch migration. In the full resolvosome a probable DNA-RuvA(4)-RuvB(12)-RuvC(2) complex forms which resolves the HJ.

It localises to the cytoplasm. It catalyses the reaction ATP + H2O = ADP + phosphate + H(+). In terms of biological role, the RuvA-RuvB-RuvC complex processes Holliday junction (HJ) DNA during genetic recombination and DNA repair, while the RuvA-RuvB complex plays an important role in the rescue of blocked DNA replication forks via replication fork reversal (RFR). RuvA specifically binds to HJ cruciform DNA, conferring on it an open structure. The RuvB hexamer acts as an ATP-dependent pump, pulling dsDNA into and through the RuvAB complex. RuvB forms 2 homohexamers on either side of HJ DNA bound by 1 or 2 RuvA tetramers; 4 subunits per hexamer contact DNA at a time. Coordinated motions by a converter formed by DNA-disengaged RuvB subunits stimulates ATP hydrolysis and nucleotide exchange. Immobilization of the converter enables RuvB to convert the ATP-contained energy into a lever motion, pulling 2 nucleotides of DNA out of the RuvA tetramer per ATP hydrolyzed, thus driving DNA branch migration. The RuvB motors rotate together with the DNA substrate, which together with the progressing nucleotide cycle form the mechanistic basis for DNA recombination by continuous HJ branch migration. Branch migration allows RuvC to scan DNA until it finds its consensus sequence, where it cleaves and resolves cruciform DNA. The protein is Holliday junction branch migration complex subunit RuvB of Listeria monocytogenes serotype 4a (strain HCC23).